A 603-amino-acid chain; its full sequence is Coagulation factor XII (603 aa).

An N-terminal signal peptide occupies residues 1-18 (GRLLLGSLLVSLESALSA). A Fibronectin type-II domain is found at 41–89 (VTGEPCYFPFQYNRQLYHHCIHKGRPGPRPWCATTPNFDQDQQWAYCLE). Disulfide bonds link C46/C72, C60/C87, C97/C109, C103/C118, C120/C129, C134/C162, C160/C169, C177/C188, C182/C197, C199/C208, C216/C294, C237/C276, C265/C289, C345/C472, C383/C399, C391/C461, C422/C425, C488/C557, C520/C536, and C547/C578. Residues 93 to 130 (VKDHCSKHNPCQRGGICVNTLSSPHCLCPDHLTGKHCQ) enclose the EGF-like 1 domain. The region spanning 132 to 172 (EKCFEPQLHRFFHENEIWFRTGPAGVAKCHCKGPDAHCKQM) is the Fibronectin type-I domain. Residues 173-209 (HSQECQTNPCLNGGRCLEVEGHHLCDCPMGYTGPFCD) form the EGF-like 2 domain. Residues 216–294 (CYEGRGVSYR…SWEYCDLAQC (79 aa)) enclose the Kringle domain. 2 N-linked (GlcNAc...) asparagine glycosylation sites follow: N248 and N270. Residues 359-602 (IVGGLVALPG…YLTWIQKHTA (244 aa)) enclose the Peptidase S1 domain. The active-site Charge relay system is H398. N-linked (GlcNAc...) asparagine glycosylation is present at N419. D447 serves as the catalytic Charge relay system. S551 acts as the Charge relay system in catalysis.

This sequence belongs to the peptidase S1 family. Interacts with HRG; the interaction, which is enhanced in the presence of zinc ions and inhibited by heparin-binding, inhibits factor XII autoactivation and contact-initiated coagulation. Post-translationally, O- and N-glycosylated.

The protein resides in the secreted. The enzyme catalyses Selective cleavage of Arg-|-Ile bonds in factor VII to form factor VIIa and factor XI to form factor XIa.. Its activity is regulated as follows. Activity is promoted in the presence of negatively charged surfaces. In terms of biological role, factor XII is a serum glycoprotein that participates in the initiation of blood coagulation, fibrinolysis, and the generation of bradykinin and angiotensin. Prekallikrein is cleaved by factor XII to form kallikrein, which then cleaves factor XII first to alpha-factor XIIa and then trypsin cleaves it to beta-factor XIIa. Alpha-factor XIIa activates factor XI to factor XIa. This Cavia porcellus (Guinea pig) protein is Coagulation factor XII (F12).